Consider the following 107-residue polypeptide: Putidaredoxin (107 aa).

The region spanning 2 to 106 (SKVVYVSHDG…GIVVDVPDRQ (105 aa)) is the 2Fe-2S ferredoxin-type domain. Residues cysteine 40, cysteine 46, cysteine 49, and cysteine 87 each contribute to the [2Fe-2S] cluster site.

This sequence belongs to the adrenodoxin/putidaredoxin family. As to quaternary structure, monomer. Requires [2Fe-2S] cluster as cofactor.

The oxidation of camphor by cytochrome P450-CAM requires the participation of a flavoprotein, putidaredoxin reductase, and an iron-sulfur protein, putidaredoxin, to mediate the transfer of electrons from NADH to P450 for oxygen activation. The sequence is that of Putidaredoxin (camB) from Pseudomonas putida (Arthrobacter siderocapsulatus).